Here is a 471-residue protein sequence, read N- to C-terminus: Metalloprotease TIKI homolog (471 aa).

Residues 1 to 24 (MAAFTLWILVLNVFLLGFQARKLA) form the signal peptide. Residues 25 to 449 (SNLKFPIQKC…SRKAAASCTP (425 aa)) lie on the Extracellular side of the membrane. 4 N-linked (GlcNAc...) asparagine glycosylation sites follow: N226, N235, N284, and N342. A compositionally biased stretch (basic residues) spans 369–402 (KAKKSLNTRRERRKGCRGRRKKSKRCQKKKKRKR). Positions 369-406 (KAKKSLNTRRERRKGCRGRRKKSKRCQKKKKRKRPDYS) are disordered. A helical membrane pass occupies residues 450–470 (IWTVSLALTCAVTCLLTYSGF). A topological domain (cytoplasmic) is located at residue R471.

It belongs to the TIKI family. The cofactor is Mn(2+). Co(2+) serves as cofactor.

The protein resides in the membrane. Metalloprotease. The polypeptide is Metalloprotease TIKI homolog (Nematostella vectensis (Starlet sea anemone)).